Reading from the N-terminus, the 454-residue chain is tRNA modification GTPase MnmE (454 aa).

The (6S)-5-formyl-5,6,7,8-tetrahydrofolate site is built by Arg-23, Glu-80, and Lys-120. A TrmE-type G domain is found at 216-377 (GMKVVIAGRP…LRDHLKSSMG (162 aa)). A K(+)-binding site is contributed by Asn-226. GTP contacts are provided by residues 226–231 (NAGKSS), 245–251 (TDIAGTT), 270–273 (DTAG), 335–338 (NKAD), and 358–360 (SAR). Ser-230 contributes to the Mg(2+) binding site. 3 residues coordinate K(+): Thr-245, Ile-247, and Thr-250. Mg(2+) is bound at residue Thr-251. (6S)-5-formyl-5,6,7,8-tetrahydrofolate is bound at residue Lys-454.

It belongs to the TRAFAC class TrmE-Era-EngA-EngB-Septin-like GTPase superfamily. TrmE GTPase family. Homodimer. Heterotetramer of two MnmE and two MnmG subunits. The cofactor is K(+).

It is found in the cytoplasm. Exhibits a very high intrinsic GTPase hydrolysis rate. Involved in the addition of a carboxymethylaminomethyl (cmnm) group at the wobble position (U34) of certain tRNAs, forming tRNA-cmnm(5)s(2)U34. This chain is tRNA modification GTPase MnmE, found in Erwinia tasmaniensis (strain DSM 17950 / CFBP 7177 / CIP 109463 / NCPPB 4357 / Et1/99).